Here is a 241-residue protein sequence, read N- to C-terminus: Methylthioribulose-1-phosphate dehydratase (241 aa).

The span at 1–12 (MSQEITQKDNND) shows a compositional bias: basic and acidic residues. The tract at residues 1–22 (MSQEITQKDNNDHLVQSSDPDH) is disordered. C101 is a substrate binding site. Zn(2+)-binding residues include H118 and H120. Residue E147 is the Proton donor/acceptor of the active site. H203 contacts Zn(2+).

Belongs to the aldolase class II family. MtnB subfamily. Requires Zn(2+) as cofactor.

The protein localises to the cytoplasm. The catalysed reaction is 5-(methylsulfanyl)-D-ribulose 1-phosphate = 5-methylsulfanyl-2,3-dioxopentyl phosphate + H2O. It functions in the pathway amino-acid biosynthesis; L-methionine biosynthesis via salvage pathway; L-methionine from S-methyl-5-thio-alpha-D-ribose 1-phosphate: step 2/6. Catalyzes the dehydration of methylthioribulose-1-phosphate (MTRu-1-P) into 2,3-diketo-5-methylthiopentyl-1-phosphate (DK-MTP-1-P). In Aspergillus terreus (strain NIH 2624 / FGSC A1156), this protein is Methylthioribulose-1-phosphate dehydratase.